The sequence spans 364 residues: Carbamoyl phosphate synthase small chain (364 aa).

CPSase stretches follow at residues 1–167 (MKRQ…PSPG) and 1–171 (MKRQ…RGER). Positions 45, 219, and 221 each coordinate L-glutamine. The 188-residue stretch at 171-358 (RIVLIDFGMK…LALIREFNKK (188 aa)) folds into the Glutamine amidotransferase type-1 domain. The Nucleophile role is filled by Cys-246. Residues Leu-247, Gln-250, Asn-288, Gly-290, and Tyr-291 each coordinate L-glutamine. Residues His-331 and Glu-333 contribute to the active site.

It belongs to the CarA family. In terms of assembly, composed of two chains; the small (or glutamine) chain promotes the hydrolysis of glutamine to ammonia, which is used by the large (or ammonia) chain to synthesize carbamoyl phosphate. Tetramer of heterodimers (alpha,beta)4.

It catalyses the reaction hydrogencarbonate + L-glutamine + 2 ATP + H2O = carbamoyl phosphate + L-glutamate + 2 ADP + phosphate + 2 H(+). The catalysed reaction is L-glutamine + H2O = L-glutamate + NH4(+). It participates in amino-acid biosynthesis; L-arginine biosynthesis; carbamoyl phosphate from bicarbonate: step 1/1. Its pathway is pyrimidine metabolism; UMP biosynthesis via de novo pathway; (S)-dihydroorotate from bicarbonate: step 1/3. Functionally, small subunit of the glutamine-dependent carbamoyl phosphate synthetase (CPSase). CPSase catalyzes the formation of carbamoyl phosphate from the ammonia moiety of glutamine, carbonate, and phosphate donated by ATP, constituting the first step of 2 biosynthetic pathways, one leading to arginine and/or urea and the other to pyrimidine nucleotides. The small subunit (glutamine amidotransferase) binds and cleaves glutamine to supply the large subunit with the substrate ammonia. The sequence is that of Carbamoyl phosphate synthase small chain from Bacillus caldolyticus.